A 308-amino-acid polypeptide reads, in one-letter code: D-alanine--D-alanine ligase (308 aa).

An ATP-grasp domain is found at 103–302 (KFVFRAAGLP…YGELVSWMVE (200 aa)). ATP is bound at residue 130-184 (MDPPYVIKPVSEGSSVGVFIVRAGDNRPPAELTSAEWNLGDEVMAERYIAGRELT). 3 residues coordinate Mg(2+): aspartate 252, glutamate 269, and asparagine 271.

Belongs to the D-alanine--D-alanine ligase family. It depends on Mg(2+) as a cofactor. The cofactor is Mn(2+).

Its subcellular location is the cytoplasm. The catalysed reaction is 2 D-alanine + ATP = D-alanyl-D-alanine + ADP + phosphate + H(+). It functions in the pathway cell wall biogenesis; peptidoglycan biosynthesis. Cell wall formation. This is D-alanine--D-alanine ligase from Parvibaculum lavamentivorans (strain DS-1 / DSM 13023 / NCIMB 13966).